The primary structure comprises 329 residues: Elongation factor Ts (329 aa).

The tract at residues 79 to 82 is involved in Mg(2+) ion dislocation from EF-Tu; that stretch reads TDFV.

It belongs to the EF-Ts family.

It localises to the cytoplasm. Its function is as follows. Associates with the EF-Tu.GDP complex and induces the exchange of GDP to GTP. It remains bound to the aminoacyl-tRNA.EF-Tu.GTP complex up to the GTP hydrolysis stage on the ribosome. The polypeptide is Elongation factor Ts (Phocaeicola vulgatus (strain ATCC 8482 / DSM 1447 / JCM 5826 / CCUG 4940 / NBRC 14291 / NCTC 11154) (Bacteroides vulgatus)).